We begin with the raw amino-acid sequence, 580 residues long: V-type proton ATPase catalytic subunit A (580 aa).

An ATP-binding site is contributed by 209 to 216; sequence GAFGCGKT.

It belongs to the ATPase alpha/beta chains family. In terms of assembly, V-ATPase is a heteromultimeric enzyme composed of a peripheral catalytic V1 complex (main components: subunits A, B, C, D, E, and F) attached to an integral membrane V0 proton pore complex (main component: the proteolipid protein).

The catalysed reaction is ATP + H2O + 4 H(+)(in) = ADP + phosphate + 5 H(+)(out). Functionally, catalytic subunit of the peripheral V1 complex of vacuolar ATPase. V-ATPase vacuolar ATPase is responsible for acidifying a variety of intracellular compartments in eukaryotic cells. The protein is V-type proton ATPase catalytic subunit A of Hordeum vulgare (Barley).